Reading from the N-terminus, the 156-residue chain is dCTP deaminase (156 aa).

DCTP contacts are provided by residues 79–84 (RSSLAR), Asp-95, Gln-124, and Tyr-138.

The protein belongs to the dCTP deaminase family. As to quaternary structure, homotrimer.

The enzyme catalyses dCTP + H2O + H(+) = dUTP + NH4(+). Its pathway is pyrimidine metabolism; dUMP biosynthesis; dUMP from dCTP (dUTP route): step 1/2. In terms of biological role, catalyzes the deamination of dCTP to dUTP. The protein is dCTP deaminase of Pyrococcus furiosus (strain ATCC 43587 / DSM 3638 / JCM 8422 / Vc1).